Consider the following 313-residue polypeptide: Olfactory receptor 1M1 (313 aa).

Topologically, residues 1 to 25 are extracellular; it reads MEPRNQTSASQFILLGLSEKPEQET. N-linked (GlcNAc...) asparagine glycosylation occurs at asparagine 5. Residues 26 to 49 form a helical membrane-spanning segment; sequence LLFSLFFCMYLVMVVGNLLIILAI. Over 50–57 the chain is Cytoplasmic; that stretch reads SIDSHLHT. The helical transmembrane segment at 58 to 79 threads the bilayer; the sequence is PMYFFLANLSLVDFCLATNTIP. Residues 80–100 are Extracellular-facing; that stretch reads KMLVSLQTGSKAISYPCCLIQ. Residues cysteine 97 and cysteine 189 are joined by a disulfide bond. Residues 101-120 form a helical membrane-spanning segment; it reads MYFFHFFGIVDSVIIAMMAY. Over 121-139 the chain is Cytoplasmic; sequence DRFVAICHPLHYAKIMSLR. The chain crosses the membrane as a helical span at residues 140 to 158; the sequence is LCRLLVGALWAFSCFISLT. Over 159-196 the chain is Extracellular; sequence HILLMARLVFCGSHEVPHYFCDLTPILRLSCTDTSVNR. Residues 197–219 form a helical membrane-spanning segment; that stretch reads IFILIVAGMVIATPFVCILASYA. At 220-236 the chain is on the cytoplasmic side; the sequence is RILVAIMKVPSAGGRKK. Residues 237–259 traverse the membrane as a helical segment; the sequence is AFSTCSSHLSVVALFYGTTIGVY. The Extracellular segment spans residues 260–272; sequence LCPSSVLTTVKEK. The helical transmembrane segment at 273 to 292 threads the bilayer; the sequence is ASAVMYTAVTPMLNPFIYSL. Topologically, residues 293-313 are cytoplasmic; that stretch reads RNRDLKGALRKLVNRKITSSS.

This sequence belongs to the G-protein coupled receptor 1 family.

The protein resides in the cell membrane. In terms of biological role, odorant receptor. This Homo sapiens (Human) protein is Olfactory receptor 1M1.